Here is a 481-residue protein sequence, read N- to C-terminus: Phototropic-responsive NPH3 family protein NPY4 (481 aa).

The BTB domain occupies 29–102 (TEIIIIIGNV…CYGITVTLNA (74 aa)). In terms of domain architecture, NPH3 spans 207 to 450 (DWWVEDLCEL…VQVLFFEQIR (244 aa)). At Tyr-391 the chain carries Phosphotyrosine. Positions 456–481 (TGYSTPELTTTTLNTEDDEWDHEKEF) are disordered. Over residues 460–469 (TPELTTTTLN) the composition is skewed to low complexity.

This sequence belongs to the NPH3 family. As to expression, expressed in the hypocotyl cells that would differentiate into vascular bundles. Highly expressed in primary root tips and radicles.

It localises to the cell membrane. The protein localises to the cytoplasm. It is found in the cytosol. Its pathway is protein modification; protein ubiquitination. Its function is as follows. May act as a substrate-specific adapter of an E3 ubiquitin-protein ligase complex (CUL3-RBX1-BTB) which mediates the ubiquitination and subsequent proteasomal degradation of target proteins. Plays an essential role in auxin-mediated organogenesis and in root gravitropic responses through the control of PIN proteins (e.g. PIN1 and PIN2) polarity in the root tip endodermal cell layer and in shoot epidermis. Recruited to the plasma membrane by PINs (e.g. PIN1 and PIN2) and, in concert with AGC kinases-mediated (e.g. D6PK and PID) PINs phosphorylation, maintains their polarity through limiting lateral diffusion-based escape. This is Phototropic-responsive NPH3 family protein NPY4 from Arabidopsis thaliana (Mouse-ear cress).